The chain runs to 346 residues: D-erythrose-4-phosphate dehydrogenase (346 aa).

R11–I12 contributes to the NAD(+) binding site. Substrate-binding positions include S163–T165, R209, T222–K223, and R245. The Nucleophile role is filled by C164. Residue N327 coordinates NAD(+).

This sequence belongs to the glyceraldehyde-3-phosphate dehydrogenase family. Epd subfamily. In terms of assembly, homotetramer.

Its subcellular location is the cytoplasm. The enzyme catalyses D-erythrose 4-phosphate + NAD(+) + H2O = 4-phospho-D-erythronate + NADH + 2 H(+). It participates in cofactor biosynthesis; pyridoxine 5'-phosphate biosynthesis; pyridoxine 5'-phosphate from D-erythrose 4-phosphate: step 1/5. Its function is as follows. Catalyzes the NAD-dependent conversion of D-erythrose 4-phosphate to 4-phosphoerythronate. This is D-erythrose-4-phosphate dehydrogenase from Vibrio vulnificus (strain CMCP6).